Consider the following 572-residue polypeptide: Terminal nucleotidyltransferase 4B (572 aa).

Residues 1-105 are disordered; the sequence is MYRSGERLLG…ADGGGVVYSG (105 aa). Residues 25–34 are compositionally biased toward polar residues; that stretch reads ETTNNNNNHH. Residues 36–76 show a composition bias toward low complexity; the sequence is PGAWARRAGSSASSPPSASSSPHPSAAVPAADPADSASGSS. Residues 89–102 show a composition bias toward gly residues; it reads RAAGGGRADGGGVV. A Glycyl lysine isopeptide (Lys-Gly) (interchain with G-Cter in SUMO2) cross-link involves residue Val-151. 2 residues coordinate Mg(2+): Asp-177 and Asp-179. Residues Gly-240, Lys-265, Ser-283, Tyr-284, Asn-368, and Arg-372 each contribute to the ATP site. Residues 308–368 enclose the PAP-associated domain; that stretch reads NYGVLLIEFF…YIEDPLQPGN (61 aa). A disordered region spans residues 435–572; the sequence is KNRPEPSCNG…RDAPLSDLCR (138 aa). Over residues 446-464 the composition is skewed to low complexity; it reads VSSSSATQSSSSDVDSDAT. Lys-470 participates in a covalent cross-link: Glycyl lysine isopeptide (Lys-Gly) (interchain with G-Cter in SUMO2). Residues 477–494 show a composition bias toward polar residues; it reads STGNRVGSQDVSLESSQA. Ser-484 is modified (phosphoserine). Glycyl lysine isopeptide (Lys-Gly) (interchain with G-Cter in SUMO2) cross-links involve residues Lys-497, Lys-512, and Lys-526. Positions 499–514 are enriched in low complexity; that stretch reads QSTQTTNTSNSTNKSQ. The span at 522–553 shows a compositional bias: polar residues; the sequence is RSSSKGFQGTTQTSHGSLMTNKQHQGKSNNQY. A Basic, involved in binding of the RNA primer motif is present at residues 557 to 563; the sequence is KKRKHKR.

The protein belongs to the DNA polymerase type-B-like family. As to quaternary structure, component of a nucleolar TRAMP-like complex, an ATP-dependent exosome regulatory complex consisting of a helicase (MTREX), an oligadenylate polymerase (TENT4B or TENT4A), and a substrate specific RNA-binding factor (ZCCHC7 or ZCCHC8). Several TRAMP-like complexes exist with specific compositions and are associated with nuclear, or nucleolar RNA exosomes. Interacts with CPEB1; the interaction is required for TENT4B-mediated translational control. Mg(2+) is required as a cofactor. It depends on Mn(2+) as a cofactor.

The protein resides in the nucleus. Its subcellular location is the nucleolus. The protein localises to the cytoplasm. It carries out the reaction RNA(n) + ATP = RNA(n)-3'-adenine ribonucleotide + diphosphate. Its function is as follows. Terminal nucleotidyltransferase that catalyzes preferentially the transfer of ATP and GTP on RNA 3' poly(A) tail creating a heterogeneous 3' poly(A) tail leading to mRNAs stabilization by protecting mRNAs from active deadenylation. Also functions as a catalytic subunit of a TRAMP-like complex which has a poly(A) RNA polymerase activity and is involved in a post-transcriptional quality control mechanism. Polyadenylation with short oligo(A) tails is required for the degradative activity of the exosome on several of its nuclear RNA substrates. Doesn't need a cofactor for polyadenylation activity (in vitro). Required for cytoplasmic polyadenylation of mRNAs involved in carbohydrate metabolism, including the glucose transporter SLC2A1/GLUT1. Plays a role in replication-dependent histone mRNA degradation, probably through terminal uridylation of mature histone mRNAs. May play a role in sister chromatid cohesion. Mediates 3' adenylation of the microRNA MIR21 followed by its 3'-to-5' trimming by the exoribonuclease PARN leading to degradation. Mediates 3' adenylation of H/ACA box snoRNAs (small nucleolar RNAs) followed by its 3'-to-5' trimming by the exoribonuclease PARN which enhances snoRNA stability and maturation. This Homo sapiens (Human) protein is Terminal nucleotidyltransferase 4B.